Here is a 257-residue protein sequence, read N- to C-terminus: tRNA (guanine-N(7)-)-methyltransferase (257 aa).

Positions 1-12 (MARDSEDQDMET) are enriched in acidic residues. Residues 1–25 (MARDSEDQDMETETNGAAEGLDPTS) are disordered. S-adenosyl-L-methionine contacts are provided by residues Gly80, 103–104 (EI), 138–139 (NA), and Leu158. Residue Asp161 is part of the active site. S-adenosyl-L-methionine is bound at residue 236 to 238 (SEE).

Belongs to the class I-like SAM-binding methyltransferase superfamily. TrmB family.

It localises to the nucleus. The catalysed reaction is guanosine(46) in tRNA + S-adenosyl-L-methionine = N(7)-methylguanosine(46) in tRNA + S-adenosyl-L-homocysteine. Its pathway is tRNA modification; N(7)-methylguanine-tRNA biosynthesis. Functionally, catalyzes the formation of N(7)-methylguanine at position 46 (m7G46) in tRNA. The chain is tRNA (guanine-N(7)-)-methyltransferase from Drosophila ananassae (Fruit fly).